The chain runs to 348 residues: MSFVDEAKIHVKGGKGGDGCVSFRREKFIEFGGPDGGNGGNGGSVIFIASSAVNTLLYFRYNQHIRAENGKAGSGKGKFGAAGRNRVVEVPVGTQLYDEDGNTLIADLNNIGQQYTVAAGGRGGIGNAQYKSSTNRAPTYFTYGTLGEEHCVLLKLKIVSDVGIIGMPNAGKSSLLSRCTASKTKVSDYPFTTLEPHLGVAYANGCELVLADIPGLIENASSGAGLGHKFLKHIERCVILLHLVDCSLPDIVSAYELVRQELKLHSQELAGKQEVVILNKCDLLSEGEVREKQKLLESSTKKEVITLSMGDELDSLIVFLHAQVKKAVVTEPSDTSFDPFLYVHYNKK.

Residues 1-159 enclose the Obg domain; it reads MSFVDEAKIH…HCVLLKLKIV (159 aa). Residues 160–329 form the OBG-type G domain; it reads SDVGIIGMPN…LHAQVKKAVV (170 aa). GTP contacts are provided by residues 166 to 173, 191 to 195, 212 to 215, 279 to 282, and 310 to 312; these read GMPNAGKS, FTTLE, DIPG, NKCD, and GDE. 2 residues coordinate Mg(2+): serine 173 and threonine 193.

The protein belongs to the TRAFAC class OBG-HflX-like GTPase superfamily. OBG GTPase family. In terms of assembly, monomer. The cofactor is Mg(2+).

The protein localises to the cytoplasm. In terms of biological role, an essential GTPase which binds GTP, GDP and possibly (p)ppGpp with moderate affinity, with high nucleotide exchange rates and a fairly low GTP hydrolysis rate. Plays a role in control of the cell cycle, stress response, ribosome biogenesis and in those bacteria that undergo differentiation, in morphogenesis control. This chain is GTPase Obg 1, found in Anaplasma marginale (strain St. Maries).